Consider the following 252-residue polypeptide: Ribosomal RNA small subunit methyltransferase J (252 aa).

Residues 104-105 (RD), 120-121 (ER), 156-157 (SS), and Asp174 contribute to the S-adenosyl-L-methionine site.

The protein belongs to the methyltransferase superfamily. RsmJ family.

The protein resides in the cytoplasm. It catalyses the reaction guanosine(1516) in 16S rRNA + S-adenosyl-L-methionine = N(2)-methylguanosine(1516) in 16S rRNA + S-adenosyl-L-homocysteine + H(+). In terms of biological role, specifically methylates the guanosine in position 1516 of 16S rRNA. This Yersinia enterocolitica serotype O:8 / biotype 1B (strain NCTC 13174 / 8081) protein is Ribosomal RNA small subunit methyltransferase J.